The chain runs to 192 residues: BREX protein BrxB (192 aa).

This sequence belongs to the BrxB family.

In terms of biological role, BREX systems (bacteriophage exclusion) provide immunity against bacteriophage. Part of a type 1 BREX system. This system allows phage adsorption but prevents phage DNA replication, without degradation of the phage DNA. Methylation of bacterial DNA by PglX probably guides self/non-self discrimination. When the brxA-brxB-brxC-pglX and pglZ-brxL operons are transformed into a susceptible B.subtilis strain (BEST7003) they confer resistance to bacteriophages SPbeta, SP16, Zeta, phi3T and SP02 and partial protection to phages SP01 and SP82G (these include lytic and temperate phage). They do not protect against phages phi105, rho10 or rho14. Additionally confers a very slight reduction in efficiency of plasmid transformation. This chain is BREX protein BrxB, found in Bacillus cereus (strain H3081.97).